The chain runs to 491 residues: Glycogen synthase 2 (491 aa).

K16 provides a ligand contact to ADP-alpha-D-glucose.

Belongs to the glycosyltransferase 1 family. Bacterial/plant glycogen synthase subfamily.

It carries out the reaction [(1-&gt;4)-alpha-D-glucosyl](n) + ADP-alpha-D-glucose = [(1-&gt;4)-alpha-D-glucosyl](n+1) + ADP + H(+). It functions in the pathway glycan biosynthesis; glycogen biosynthesis. Functionally, synthesizes alpha-1,4-glucan chains using ADP-glucose. The sequence is that of Glycogen synthase 2 from Nitrosococcus oceani (strain ATCC 19707 / BCRC 17464 / JCM 30415 / NCIMB 11848 / C-107).